The following is a 218-amino-acid chain: Protein-L-isoaspartate O-methyltransferase (218 aa).

Residue serine 63 is part of the active site.

Belongs to the methyltransferase superfamily. L-isoaspartyl/D-aspartyl protein methyltransferase family.

It is found in the cytoplasm. It catalyses the reaction [protein]-L-isoaspartate + S-adenosyl-L-methionine = [protein]-L-isoaspartate alpha-methyl ester + S-adenosyl-L-homocysteine. Functionally, catalyzes the methyl esterification of L-isoaspartyl residues in peptides and proteins that result from spontaneous decomposition of normal L-aspartyl and L-asparaginyl residues. It plays a role in the repair and/or degradation of damaged proteins. The chain is Protein-L-isoaspartate O-methyltransferase from Syntrophus aciditrophicus (strain SB).